A 517-amino-acid polypeptide reads, in one-letter code: Pentatricopeptide repeat-containing protein At1g13040, mitochondrial (517 aa).

The transit peptide at 1–57 directs the protein to the mitochondrion; sequence MHQTLGAVRLAYRSRIANLVKSGMIDNAVQVFDEMRHSSYRVFSFDYNRFIGVLVRE. 14 PPR repeats span residues 8–42, 43–77, 78–112, 113–147, 148–182, 183–218, 219–253, 254–288, 289–320, 324–358, 359–393, 394–428, 429–463, and 464–498; these read VRLA…SYRV, FSFD…GFSL, IPFT…GFIP, DIWA…GREP, DVVS…GVSP, DNKA…RVKL, STVV…GCEP, DLVT…GIQL, DAYS…MEPR, DVVS…GMVM, NVVT…GLSP, DRIF…EITP, DAIS…ECCP, and DELT…GFTL.

It belongs to the PPR family. P subfamily.

Its subcellular location is the mitochondrion. This Arabidopsis thaliana (Mouse-ear cress) protein is Pentatricopeptide repeat-containing protein At1g13040, mitochondrial.